Consider the following 116-residue polypeptide: Iron-sulfur cluster insertion protein ErpA (116 aa).

Cysteine 44, cysteine 108, and cysteine 110 together coordinate iron-sulfur cluster.

The protein belongs to the HesB/IscA family. As to quaternary structure, homodimer. Iron-sulfur cluster is required as a cofactor.

In terms of biological role, required for insertion of 4Fe-4S clusters for at least IspG. The polypeptide is Iron-sulfur cluster insertion protein ErpA (Pseudomonas putida (strain ATCC 47054 / DSM 6125 / CFBP 8728 / NCIMB 11950 / KT2440)).